The primary structure comprises 117 residues: Non-specific lipid-transfer protein (117 aa).

Residues 1–26 (MASSAVIKLACAVLLCIVVAAPYAEA) form the signal peptide. Intrachain disulfides connect cysteine 30/cysteine 76, cysteine 40/cysteine 53, cysteine 54/cysteine 99, and cysteine 74/cysteine 113.

It belongs to the plant LTP family.

Functionally, plant non-specific lipid-transfer proteins transfer phospholipids as well as galactolipids across membranes. May play a role in wax or cutin deposition in the cell walls of expanding epidermal cells and certain secretory tissues. This is Non-specific lipid-transfer protein from Spinacia oleracea (Spinach).